Reading from the N-terminus, the 561-residue chain is Mercuric reductase (561 aa).

In terms of domain architecture, HMA spans 1-65; the sequence is MTTLKITGMT…AVAGLGYEAT (65 aa). C11 and C14 together coordinate a metal cation. FAD-binding residues include A110, G130, and T135. C136 and C141 are oxidised to a cystine. FAD is bound by residues K145, A211, D403, and V411. Residues C558 and C559 each contribute to the Hg(2+) site.

This sequence belongs to the class-I pyridine nucleotide-disulfide oxidoreductase family. As to quaternary structure, homodimer. FAD serves as cofactor.

The enzyme catalyses Hg + NADP(+) + H(+) = Hg(2+) + NADPH. Resistance to Hg(2+) in bacteria appears to be governed by a specialized system which includes mercuric reductase. MerA protein is responsible for volatilizing mercury as Hg(0). This is Mercuric reductase (merA) from Acinetobacter calcoaceticus.